Here is a 96-residue protein sequence, read N- to C-terminus: Fluoride-specific ion channel FluC 1 (96 aa).

2 consecutive transmembrane segments (helical) span residues 4-24 (LIQGLGVGAGAALGVCVRLAL) and 26-46 (LWLGDSAWPILTINVLGAFLM). Positions 61 and 64 each coordinate Na(+). The chain crosses the membrane as a helical span at residues 69–89 (MMLNDVSFYFFTAVGCILAWL).

Belongs to the fluoride channel Fluc/FEX (TC 1.A.43) family.

The protein localises to the cell membrane. It catalyses the reaction fluoride(in) = fluoride(out). Its activity is regulated as follows. Na(+) is not transported, but it plays an essential structural role and its presence is essential for fluoride channel function. Its function is as follows. Fluoride-specific ion channel. Important for reducing fluoride concentration in the cell, thus reducing its toxicity. This chain is Fluoride-specific ion channel FluC 1, found in Corynebacterium glutamicum (strain ATCC 13032 / DSM 20300 / JCM 1318 / BCRC 11384 / CCUG 27702 / LMG 3730 / NBRC 12168 / NCIMB 10025 / NRRL B-2784 / 534).